The chain runs to 428 residues: Elongation factor 1-alpha (428 aa).

The tr-type G domain occupies 5 to 225; it reads KPILNVAFIG…DAFQPPEKPT (221 aa). The segment at 14–21 is G1; it reads GHVDAGKS. 14-21 contributes to the GTP binding site; it reads GHVDAGKS. Serine 21 lines the Mg(2+) pocket. The interval 70–74 is G2; the sequence is GVTID. Positions 91-94 are G3; sequence DCPG. Residues 91–95 and 149–152 contribute to the GTP site; these read DCPGH and NKMD. The G4 stretch occupies residues 149–152; sequence NKMD. Positions 189–191 are G5; sequence ASL.

The protein belongs to the TRAFAC class translation factor GTPase superfamily. Classic translation factor GTPase family. EF-Tu/EF-1A subfamily.

The protein localises to the cytoplasm. The catalysed reaction is GTP + H2O = GDP + phosphate + H(+). GTP hydrolase that promotes the GTP-dependent binding of aminoacyl-tRNA to the A-site of ribosomes during protein biosynthesis. The chain is Elongation factor 1-alpha from Methanococcus maripaludis (strain C6 / ATCC BAA-1332).